Reading from the N-terminus, the 493-residue chain is 3-octaprenyl-4-hydroxybenzoate carboxy-lyase (493 aa).

Asn-172 serves as a coordination point for Mn(2+). Prenylated FMN contacts are provided by residues 175 to 177, 189 to 191, and 194 to 195; these read IYR, RWL, and RG. Glu-238 is a binding site for Mn(2+). Residue Asp-287 is the Proton donor of the active site.

Belongs to the UbiD family. In terms of assembly, homohexamer. Requires prenylated FMN as cofactor. Mn(2+) serves as cofactor.

The protein localises to the cell membrane. The enzyme catalyses a 4-hydroxy-3-(all-trans-polyprenyl)benzoate + H(+) = a 2-(all-trans-polyprenyl)phenol + CO2. Its pathway is cofactor biosynthesis; ubiquinone biosynthesis. Catalyzes the decarboxylation of 3-octaprenyl-4-hydroxy benzoate to 2-octaprenylphenol, an intermediate step in ubiquinone biosynthesis. The protein is 3-octaprenyl-4-hydroxybenzoate carboxy-lyase of Shewanella sediminis (strain HAW-EB3).